Here is a 454-residue protein sequence, read N- to C-terminus: Chromosomal replication initiator protein DnaA (454 aa).

The domain I, interacts with DnaA modulators stretch occupies residues 1 to 74 (MFDLEKFWDS…IQSAYAYAGI (74 aa)). The tract at residues 74 to 116 (IDIYPVFVVKNGPTPSSERMLEPQPQAKPEKARPQGREFTKDL) is domain II. The interval 88–112 (PSSERMLEPQPQAKPEKARPQGREF) is disordered. Over residues 101–112 (KPEKARPQGREF) the composition is skewed to basic and acidic residues. The domain III, AAA+ region stretch occupies residues 117–333 (RLNEKYTFEN…GALVKVQAQA (217 aa)). ATP-binding residues include glycine 161, glycine 163, lysine 164, and threonine 165. Residues 334–454 (TIQKQDINIG…VSDLRQMLER (121 aa)) are domain IV, binds dsDNA.

Belongs to the DnaA family. Oligomerizes as a right-handed, spiral filament on DNA at oriC.

The protein resides in the cytoplasm. Its function is as follows. Plays an essential role in the initiation and regulation of chromosomal replication. ATP-DnaA binds to the origin of replication (oriC) to initiate formation of the DNA replication initiation complex once per cell cycle. Binds the DnaA box (a 9 base pair repeat at the origin) and separates the double-stranded (ds)DNA. Forms a right-handed helical filament on oriC DNA; dsDNA binds to the exterior of the filament while single-stranded (ss)DNA is stabiized in the filament's interior. The ATP-DnaA-oriC complex binds and stabilizes one strand of the AT-rich DNA unwinding element (DUE), permitting loading of DNA polymerase. After initiation quickly degrades to an ADP-DnaA complex that is not apt for DNA replication. Binds acidic phospholipids. The protein is Chromosomal replication initiator protein DnaA of Lactobacillus delbrueckii subsp. bulgaricus (strain ATCC 11842 / DSM 20081 / BCRC 10696 / JCM 1002 / NBRC 13953 / NCIMB 11778 / NCTC 12712 / WDCM 00102 / Lb 14).